We begin with the raw amino-acid sequence, 327 residues long: Transaldolase (327 aa).

The Schiff-base intermediate with substrate role is filled by K132.

This sequence belongs to the transaldolase family. Type 1 subfamily.

It localises to the cytoplasm. It carries out the reaction D-sedoheptulose 7-phosphate + D-glyceraldehyde 3-phosphate = D-erythrose 4-phosphate + beta-D-fructose 6-phosphate. It functions in the pathway carbohydrate degradation; pentose phosphate pathway; D-glyceraldehyde 3-phosphate and beta-D-fructose 6-phosphate from D-ribose 5-phosphate and D-xylulose 5-phosphate (non-oxidative stage): step 2/3. Transaldolase is important for the balance of metabolites in the pentose-phosphate pathway. This Chlamydia muridarum (strain MoPn / Nigg) protein is Transaldolase.